The primary structure comprises 418 residues: MHNTIYVLGFRHQTTPASVREKLAFSPENILNTLPFLQAQCAGAEILLLSTCNRSEWYFASNTPPRLEEWLYQHTAISSEELKRHLFIYTDREAVQHLYRVACGLDSLILGEPQILGQLKAAYRLAKKAGSIGSWLERLFQHSFALAKHVRHQTDIGKNPVSVAYAGVQLTHQFFDDYSKRTAIIVGAGETAQLVARYLHDLKIKRLIIANRTLNRAQQLAESVGGYALSLPQLADHLHEADMIFGCARADVFLVTQNMAITALQRRQNTLQVYIDLGIPHNFDRNIDNKENAFLYDMDNLAQLIDKNRETRQKAAAEAETFIRLYSNDFLNWTQEKPQQHMIRHIRADAHNIRQKLLIMAYRQLAQGADPEKVLAEMSYKLTNKLLHQPCALIHAIPPDHKDWLAVVADTFNAELPK.

Substrate-binding positions include 51–54 (TCNR), Ser107, 112–114 (EPQ), and Gln118. The active-site Nucleophile is Cys52. Position 187–192 (187–192 (GAGETA)) interacts with NADP(+).

The protein belongs to the glutamyl-tRNA reductase family. In terms of assembly, homodimer.

It carries out the reaction (S)-4-amino-5-oxopentanoate + tRNA(Glu) + NADP(+) = L-glutamyl-tRNA(Glu) + NADPH + H(+). The protein operates within porphyrin-containing compound metabolism; protoporphyrin-IX biosynthesis; 5-aminolevulinate from L-glutamyl-tRNA(Glu): step 1/2. Its function is as follows. Catalyzes the NADPH-dependent reduction of glutamyl-tRNA(Glu) to glutamate 1-semialdehyde (GSA). In Dichelobacter nodosus (strain VCS1703A), this protein is Glutamyl-tRNA reductase.